The following is a 97-amino-acid chain: Large ribosomal subunit protein uL23 (97 aa).

It belongs to the universal ribosomal protein uL23 family. Part of the 50S ribosomal subunit. Contacts protein L29, and trigger factor when it is bound to the ribosome.

Its function is as follows. One of the early assembly proteins it binds 23S rRNA. One of the proteins that surrounds the polypeptide exit tunnel on the outside of the ribosome. Forms the main docking site for trigger factor binding to the ribosome. In Marinobacter nauticus (strain ATCC 700491 / DSM 11845 / VT8) (Marinobacter aquaeolei), this protein is Large ribosomal subunit protein uL23.